Here is a 413-residue protein sequence, read N- to C-terminus: ATP phosphoribosyltransferase regulatory subunit (413 aa).

Positions 1-21 are disordered; that stretch reads MRSRAARKFSTTPGTRDVLPP.

It belongs to the class-II aminoacyl-tRNA synthetase family. HisZ subfamily. As to quaternary structure, heteromultimer composed of HisG and HisZ subunits.

The protein resides in the cytoplasm. It functions in the pathway amino-acid biosynthesis; L-histidine biosynthesis; L-histidine from 5-phospho-alpha-D-ribose 1-diphosphate: step 1/9. Functionally, required for the first step of histidine biosynthesis. May allow the feedback regulation of ATP phosphoribosyltransferase activity by histidine. In Rubrobacter xylanophilus (strain DSM 9941 / JCM 11954 / NBRC 16129 / PRD-1), this protein is ATP phosphoribosyltransferase regulatory subunit.